The following is a 622-amino-acid chain: Dynein axonemal assembly factor 1 (622 aa).

A disordered region spans residues 1 to 80; that stretch reads MHPEVSEPQA…ARNDRDDRGP (80 aa). A compositionally biased stretch (basic and acidic residues) spans 22–42; that stretch reads AGDHGRAGPGVRKEEINETKE. Residues 48–59 show a composition bias toward low complexity; the sequence is STTSCQSQKQQS. Over residues 62–80 the composition is skewed to basic and acidic residues; it reads SRLDCRSGYARNDRDDRGP. LRR repeat units lie at residues 101 to 123, 124 to 145, 146 to 167, 168 to 189, 190 to 211, and 215 to 236; these read ALND…EEYT, GLRC…QAQS, ELRC…EPLQ, KLDA…SCLP, VLNT…QHLR, and RLCV…SVLE. In terms of domain architecture, LRRCT spans 249-288; the sequence is NPVTKHIPNYRRTVTVRLKQLTYLDDRPVFPKDRACAEAW. Residues 326–336 are compositionally biased toward basic and acidic residues; it reads EERKKARDKGE. A disordered region spans residues 326–360; the sequence is EERKKARDKGETPLPDSEESSSTSPEAQDKPPLGE. The span at 337-351 shows a compositional bias: low complexity; that stretch reads TPLPDSEESSSTSPE. Residues Ser-349, Ser-464, and Ser-487 each carry the phosphoserine modification. Disordered stretches follow at residues 481–503 and 540–622; these read SSLS…EHTP and LETQ…FGLD. Residues 540–550 show a composition bias toward polar residues; sequence LETQGQVFSTT.

Belongs to the DNAAF1 family.

The protein resides in the cell projection. It is found in the cilium. Functionally, cilium-specific protein required for the stability of the ciliary architecture. Plays a role in cytoplasmic preassembly of dynein arms. Involved in regulation of microtubule-based cilia and actin-based brush border microvilli. The protein is Dynein axonemal assembly factor 1 (Dnaaf1) of Peromyscus leucopus (White-footed mouse).